The sequence spans 312 residues: Porphobilinogen deaminase (312 aa).

C241 carries the post-translational modification S-(dipyrrolylmethanemethyl)cysteine.

Belongs to the HMBS family. Monomer. Dipyrromethane serves as cofactor.

The catalysed reaction is 4 porphobilinogen + H2O = hydroxymethylbilane + 4 NH4(+). Its pathway is porphyrin-containing compound metabolism; protoporphyrin-IX biosynthesis; coproporphyrinogen-III from 5-aminolevulinate: step 2/4. Functionally, tetrapolymerization of the monopyrrole PBG into the hydroxymethylbilane pre-uroporphyrinogen in several discrete steps. This chain is Porphobilinogen deaminase, found in Pelotomaculum thermopropionicum (strain DSM 13744 / JCM 10971 / SI).